Here is a 238-residue protein sequence, read N- to C-terminus: Hydatid disease diagnostic antigen P-29 (238 aa).

The BAR domain occupies 18 to 238 (GELVNKNEKT…AKECSMMLGE (221 aa)).

The sequence is that of Hydatid disease diagnostic antigen P-29 from Echinococcus granulosus (Hydatid tapeworm).